A 104-amino-acid polypeptide reads, in one-letter code: Chemokine-like protein MC148 (104 aa).

As to quaternary structure, interacts with host CXCL12.

In terms of biological role, plays a role in antagonizing the chemotaxis of multiple leukocyte subsets induced by CC and CXC chemokines. Displaces the interaction between CXCL12 and CXCR4 and thereby inactivates the antiviral activity of host CXCL12. In Homo sapiens (Human), this protein is Chemokine-like protein MC148 (MC148).